Reading from the N-terminus, the 273-residue chain is Undecaprenyl-diphosphatase (273 aa).

Helical transmembrane passes span 4–24 (FLLL…FLPI), 43–63 (KGKV…CWEY), 83–103 (FVLN…LFIK), 109–129 (LFHP…ILWA), 184–204 (ATEF…FYDL), 218–238 (VFAI…RGLL), and 248–268 (VFAW…YSGM).

Belongs to the UppP family.

The protein resides in the cell inner membrane. It catalyses the reaction di-trans,octa-cis-undecaprenyl diphosphate + H2O = di-trans,octa-cis-undecaprenyl phosphate + phosphate + H(+). In terms of biological role, catalyzes the dephosphorylation of undecaprenyl diphosphate (UPP). Confers resistance to bacitracin. This chain is Undecaprenyl-diphosphatase, found in Nitrosospira multiformis (strain ATCC 25196 / NCIMB 11849 / C 71).